The following is a 103-amino-acid chain: NADH-quinone oxidoreductase subunit K 2 (103 aa).

Transmembrane regions (helical) follow at residues L7–I27, I31–A51, and I63–I83.

It belongs to the complex I subunit 4L family. NDH-1 is composed of 14 different subunits. Subunits NuoA, H, J, K, L, M, N constitute the membrane sector of the complex.

The protein resides in the cell inner membrane. The catalysed reaction is a quinone + NADH + 5 H(+)(in) = a quinol + NAD(+) + 4 H(+)(out). Its function is as follows. NDH-1 shuttles electrons from NADH, via FMN and iron-sulfur (Fe-S) centers, to quinones in the respiratory chain. The immediate electron acceptor for the enzyme in this species is believed to be ubiquinone. Couples the redox reaction to proton translocation (for every two electrons transferred, four hydrogen ions are translocated across the cytoplasmic membrane), and thus conserves the redox energy in a proton gradient. This Koribacter versatilis (strain Ellin345) protein is NADH-quinone oxidoreductase subunit K 2.